Reading from the N-terminus, the 377-residue chain is RING finger protein 215 (377 aa).

The Cytoplasmic portion of the chain corresponds to 1-22; it reads MGPAARPALRSPPPPPPPPPSP. The disordered stretch occupies residues 1–22; it reads MGPAARPALRSPPPPPPPPPSP. The segment covering 10-22 has biased composition (pro residues); it reads RSPPPPPPPPPSP. A helical membrane pass occupies residues 23-43; sequence LLLLLPLLPLWLGLAGPGAAA. Residues 44–250 are Extracellular-facing; sequence DGSEPAAGAG…GGSRAQEQKP (207 aa). N-linked (GlcNAc...) asparagine glycosylation occurs at N186. Residues 251-271 traverse the membrane as a helical segment; that stretch reads LQQLWNAILLVAMLLCTGLVV. Residues 272–377 are Cytoplasmic-facing; it reads QAQRQASRQS…NVLGNRYSDD (106 aa). The RING-type; atypical zinc-finger motif lies at 325–366; that stretch reads CAVCLDYFCNKQWLRVLPCKHEFHRDCVDPWLMLQQTCPLCK.

The protein resides in the membrane. This Homo sapiens (Human) protein is RING finger protein 215 (RNF215).